The following is a 449-amino-acid chain: HSPB1-associated protein 1 homolog (449 aa).

Positions 102 to 266 constitute a JmjC domain; it reads WAYADYKYIA…DEARVAEALT (165 aa). Residues 385–395 are compositionally biased toward basic and acidic residues; sequence DQDKLRSDNKL. The disordered stretch occupies residues 385–416; that stretch reads DQDKLRSDNKLGQRSGQSVLQDTENPGGSGEM. The segment covering 396 to 410 has biased composition (polar residues); it reads GQRSGQSVLQDTENP.

It localises to the cytoplasm. In terms of biological role, may play a role in cellular stress response. The chain is HSPB1-associated protein 1 homolog (hspbap1) from Danio rerio (Zebrafish).